The following is a 365-amino-acid chain: 1-aminocyclopropane-1-carboxylate oxidase homolog 1 (365 aa).

Residues 212–313 (CTNSLLLLGH…RISVACFFSS (102 aa)) form the Fe2OG dioxygenase domain. Fe cation contacts are provided by His-238, Asp-240, and His-294.

This sequence belongs to the iron/ascorbate-dependent oxidoreductase family. Fe cation serves as cofactor.

This Arabidopsis thaliana (Mouse-ear cress) protein is 1-aminocyclopropane-1-carboxylate oxidase homolog 1.